A 158-amino-acid polypeptide reads, in one-letter code: Snaclec coagulation factor X-activating enzyme light chain 2 (158 aa).

The N-terminal stretch at 1 to 23 (MGRSISVSFGLLAVFLSLSGTGA) is a signal peptide. 3 disulfide bridges follow: Cys27–Cys38, Cys55–Cys152, and Cys127–Cys144. The 120-residue stretch at 34 to 153 (YRYFCYRVFK…CEEPYPFVCK (120 aa)) folds into the C-type lectin domain.

It belongs to the snaclec family. Heterotrimer; disulfide-linked. The heterotrimer consists of 1 heavy chain (a metalloproteinase) and 2 light chains: LC1 and LC2. In terms of tissue distribution, expressed by the venom gland.

The protein localises to the secreted. In terms of biological role, regulatory subunit of the blood coagulation factor X-activating enzyme. Activates coagulation factor X (F10) by cleaving the Arg-Ile bond at position 234, activates coagulation factor IX (F9) by cleaving the Arg-Val bond at position 226 and is also able to activate protein C (PROC). May serve as an exosite by which the enzyme recognizes and binds to the Gla domain of factor X (F10) in a calcium-dependent manner. The protein is Snaclec coagulation factor X-activating enzyme light chain 2 (LC2) of Macrovipera lebetinus (Levantine viper).